A 249-amino-acid chain; its full sequence is MLDVLNTINFLPLAELEVGQHFYWELGSFKIHGQILLTSWFVIALILLAAFISSLNVQRIPSGMQNFMESVLEFIRSLTKDQIGEKDYRPWVPFIGTLFLFIFVSNWSGALVPWKVIELPSGELAAPTSDINTTVALALLTSIAYFYAGISKKGLGYFAGYAEPVPFMVPFKIIEDFTKPLSLSFRLFGNILADELVVGVLVLLVPLFIPLPLMVLGLFLSAIQALIFATLAANYIGEALEEHGAEDHD.

The next 5 helical transmembrane spans lie at 35–55 (ILLTSWFVIALILLAAFISSL), 92–112 (VPFIGTLFLFIFVSNWSGALV), 131–151 (INTTVALALLTSIAYFYAGIS), 187–209 (LFGNILADELVVGVLVLLVPLFI), and 221–241 (SAIQALIFATLAANYIGEALE).

It belongs to the ATPase A chain family. As to quaternary structure, F-type ATPases have 2 components, CF(1) - the catalytic core - and CF(0) - the membrane proton channel. CF(1) has five subunits: alpha(3), beta(3), gamma(1), delta(1), epsilon(1). CF(0) has four main subunits: a, b, b' and c.

It localises to the cellular thylakoid membrane. Functionally, key component of the proton channel; it plays a direct role in the translocation of protons across the membrane. The protein is ATP synthase subunit a of Trichodesmium erythraeum (strain IMS101).